The following is a 296-amino-acid chain: tRNA uridine(34) hydroxylase (296 aa).

In terms of domain architecture, Rhodanese spans 132 to 226 (AGRPVVMLDT…YFEEVGGAHY (95 aa)). Residue Cys186 is the Cysteine persulfide intermediate of the active site.

It belongs to the TrhO family.

The catalysed reaction is uridine(34) in tRNA + AH2 + O2 = 5-hydroxyuridine(34) in tRNA + A + H2O. Functionally, catalyzes oxygen-dependent 5-hydroxyuridine (ho5U) modification at position 34 in tRNAs. This is tRNA uridine(34) hydroxylase from Burkholderia thailandensis (strain ATCC 700388 / DSM 13276 / CCUG 48851 / CIP 106301 / E264).